A 352-amino-acid polypeptide reads, in one-letter code: Protein CIA1 (352 aa).

7 WD repeats span residues 18-64, 72-111, 116-155, 161-200, 211-250, 265-303, and 315-352; these read GHTD…RSWT, THTRTVRSCAWSPSGQLLATASFDGTTGIWKNYGSEFECI, GHENEVKSVSWNASGSCLATCSRDKSVWIWEVLEGNEYDC, GHTQDVKMVQWHPTMDVLFSCSYDNTIKVWWSEDDDGEYQ, GHSSTVWSISFNAAGDKMVTCSDDLTLKIWGTDIAKMQSG, YHDRTIYSAHWSRDDIIASGAGDNAIRLFVDSKHDSVDG, and AHENDVNSVQWSPGEGNRLLASASDDGMVKIWQLATKP.

The protein belongs to the WD repeat CIA1 family. As to quaternary structure, part of a complex composed of AE7, CIA1, MMS19 and NAR1. Interacts with AE7 and NAR1.

It is found in the nucleus. The protein localises to the cytoplasm. In terms of biological role, essential component of the cytosolic iron-sulfur (Fe-S) protein assembly (CIA) machinery. Required for the maturation of extramitochondrial Fe/S proteins. This Arabidopsis thaliana (Mouse-ear cress) protein is Protein CIA1.